The following is a 310-amino-acid chain: Basic salivary proline-rich protein 4 (310 aa).

A signal peptide spans 1–16; it reads MLLILLSVALLALSSA. A disordered region spans residues 14 to 310; it reads SSAESSSEDV…RPAQGQQPPQ (297 aa). A run of 9 repeats spans residues 35–55, 56–76, 77–97, 98–118, 119–139, 140–160, 161–181, 182–202, and 203–223. The segment at 35-234 is 9.5 X 21 AA tandem repeats of K-P-[EQ]-[GR]-[PR]-[PR]-P-Q-G-G-N-Q-[PS]-[QH]-[RG]-[PT]-P-P-[PH]-P-G; the sequence is KPEGRRPQGG…PEGPPPQEGN (200 aa). Pro residues predominate over residues 48-63; sequence QRPPPPPGKPQGPPPQ. N-linked (GlcNAc...) asparagine glycosylation is found at N66, N87, and N108. Residues 133–147 are compositionally biased toward pro residues; the sequence is GPPPTPGKPEGPPPQ. N150, N171, and N192 each carry an N-linked (GlcNAc...) asparagine glycan. Residues 196–210 show a composition bias toward pro residues; the sequence is RPPPPPGKPERPPPQ. Residue N213 is glycosylated (N-linked (GlcNAc...) asparagine). A compositionally biased stretch (pro residues) spans 217–231; sequence GPPPHPGKPEGPPPQ. The stretch at 224–234 is one 10; truncated repeat; that stretch reads KPEGPPPQEGN. N234 is a glycosylation site (N-linked (GlcNAc...) asparagine). Residues 258–310 show a composition bias toward pro residues; that stretch reads QGPPPPGKPQGPPPAGGNPQQPQAPPAGKPQGPPPPPQGGRPPRPAQGQQPPQ.

In terms of processing, N-glycosylated. Proteolytically cleaved at the tripeptide Xaa-Pro-Gln, where Xaa in the P(3) position is mostly lysine. The endoprotease may be of microbial origin. Pyroglutamate formation found on at least Gln-46, Gln-48, Gln-67, Gln-88; Gln-90; Gln-193; Gln-288 Gln-214 and Gln-295, preferentially in diabetic, and head and neck cancer patients.

It localises to the secreted. The polypeptide is Basic salivary proline-rich protein 4 (PRB4) (Homo sapiens (Human)).